Consider the following 382-residue polypeptide: GTPase Obg (382 aa).

Residues 2–161 (VKFADESKIR…REIIVELNII (160 aa)) form the Obg domain. The OBG-type G domain occupies 162-328 (ADIGLVGFPN…VKKAFIRLAD (167 aa)). GTP contacts are provided by residues 168 to 175 (GFPNAGKS), 193 to 197 (FTTKI), 215 to 218 (DIPG), 282 to 285 (TKLD), and 309 to 311 (SLY). The Mg(2+) site is built by S175 and T195. Positions 360–382 (EEKNDDEHFGATVSLSRKRKPKK) are disordered.

The protein belongs to the TRAFAC class OBG-HflX-like GTPase superfamily. OBG GTPase family. In terms of assembly, monomer. The cofactor is Mg(2+).

Its subcellular location is the cytoplasm. Functionally, an essential GTPase which binds GTP, GDP and possibly (p)ppGpp with moderate affinity, with high nucleotide exchange rates and a fairly low GTP hydrolysis rate. Plays a role in control of the cell cycle, stress response, ribosome biogenesis and in those bacteria that undergo differentiation, in morphogenesis control. The polypeptide is GTPase Obg (Treponema denticola (strain ATCC 35405 / DSM 14222 / CIP 103919 / JCM 8153 / KCTC 15104)).